A 466-amino-acid polypeptide reads, in one-letter code: MSITSVASVFKGDFAIGSQITVRGWVRSRRDSKAGISFLAVYDGSCFDPIQGVVPNNLENYTNEVLKLTAGCSVVMTGEVVESPGQGQAFEMQVTKVEVAGLVEDPDTYPMAAKRHSIEHLRELAHLRPRTNIIGAVARVRNCLSQAIHRFYNEQGYIWVSTPLITASDTEGAGEMFRVSTLDLENLPRTDKGTVDYAEDFFGKESFLTVSGQLNAETYACALSKVYTFGPTFRAENSNTSRHLAEFWMVEPEVAFANLDDAAKLAEDMLKYCFKAVLEERRDDLEFFAQRVEKTAIERLENFVTSDFAQIDYTDAIEILKACDKDFEYDVEWGIDLHSEHERYLAEEHFKAPVVVKNYPKDIKAFYMRLNDDGKTVAAMDVLAPGIGEIIGGAQREERLDVLDARLAEMELSQEDYWWYRDLRRYGTVPHAGFGLGFERLVSYVTGVSNIRDVIPFPRSPKSANF.

Belongs to the class-II aminoacyl-tRNA synthetase family. In terms of assembly, homodimer.

It is found in the cytoplasm. It carries out the reaction tRNA(Asn) + L-asparagine + ATP = L-asparaginyl-tRNA(Asn) + AMP + diphosphate + H(+). The chain is Asparagine--tRNA ligase from Shewanella pealeana (strain ATCC 700345 / ANG-SQ1).